Consider the following 406-residue polypeptide: MANVLDELLERGYIKQFTHEEETRKLLENEKITFYIGFDPTADSLHVGHFIAMMFMAHMQRAGHRPIALIGGGTAMVGDPSGKTDMRKMLTKEDIQHNVDSIKKQMERFIDFSDGKAILANNADWLLNLNYVDFLREVGVHFSVNRMLTAECFKQRLEKGLSFLEFNYMLMQGYDFYELNQKYNCKMQLGGDDQWSNMIAGVELVRRKAQGEAMAMTCTLLTNSQGQKMGKTVGGALWLDPAKTSPYDFYQYWRNVDDADVEKCLALLTFLPMDEVRRLGALEGAEINGAKKVLAYEITKLVHGEEEAKKAEEAATALFAGGADMSNVPTVTIAKEEIGLPILDVMASTKIIPSKKEGRRLIEQGGLSINGVKVEGVNRILTEEDFQDGAVLIKRGKKNYNKIEIK.

Y35 contacts L-tyrosine. Residues 40 to 49 (PTADSLHVGH) carry the 'HIGH' region motif. Residues Y168 and Q172 each contribute to the L-tyrosine site. The 'KMSKS' region motif lies at 228-232 (KMGKT). K231 contacts ATP. An S4 RNA-binding domain is found at 340–404 (LPILDVMAST…RGKKNYNKIE (65 aa)).

It belongs to the class-I aminoacyl-tRNA synthetase family. TyrS type 1 subfamily. In terms of assembly, homodimer.

Its subcellular location is the cytoplasm. The enzyme catalyses tRNA(Tyr) + L-tyrosine + ATP = L-tyrosyl-tRNA(Tyr) + AMP + diphosphate + H(+). Functionally, catalyzes the attachment of tyrosine to tRNA(Tyr) in a two-step reaction: tyrosine is first activated by ATP to form Tyr-AMP and then transferred to the acceptor end of tRNA(Tyr). This is Tyrosine--tRNA ligase from Clostridium beijerinckii (strain ATCC 51743 / NCIMB 8052) (Clostridium acetobutylicum).